A 92-amino-acid chain; its full sequence is uncharacterized protein (92 aa).

This is an uncharacterized protein from Dictyostelium discoideum (Social amoeba).